The following is a 317-amino-acid chain: Methionyl-tRNA formyltransferase (317 aa).

117-120 contacts (6S)-5,6,7,8-tetrahydrofolate; the sequence is SLLP.

This sequence belongs to the Fmt family.

It catalyses the reaction L-methionyl-tRNA(fMet) + (6R)-10-formyltetrahydrofolate = N-formyl-L-methionyl-tRNA(fMet) + (6S)-5,6,7,8-tetrahydrofolate + H(+). Its function is as follows. Attaches a formyl group to the free amino group of methionyl-tRNA(fMet). The formyl group appears to play a dual role in the initiator identity of N-formylmethionyl-tRNA by promoting its recognition by IF2 and preventing the misappropriation of this tRNA by the elongation apparatus. In Herminiimonas arsenicoxydans, this protein is Methionyl-tRNA formyltransferase.